Here is a 467-residue protein sequence, read N- to C-terminus: Metal transporter cnnm-4 (467 aa).

The Extracellular portion of the chain corresponds to 1-110 (MELYAAGRYD…EIPEGKDKTR (110 aa)). Asn-61 is a glycosylation site (N-linked (GlcNAc...) asparagine). The CNNM transmembrane domain occupies 107–293 (DKTRVYFMMP…LEDEEAADGN (187 aa)). Residues 111-131 (VYFMMPLLVLCLGLSATFSGL) traverse the membrane as a helical segment. At 132–170 (NLAIMSFSINDLKLIQESDSDKLMKQRAMDVMRLRRNSN) the chain is on the cytoplasmic side. A helical membrane pass occupies residues 171-191 (FVLVTIIFGNCFCNISITLLM). Topologically, residues 192–196 (NYFAE) are extracellular. The chain crosses the membrane as a helical span at residues 197-217 (FYGFGGFIFVELISTALLLIF). The Cytoplasmic portion of the chain corresponds to 218–238 (TEILPSLIFTKNALAIASRLQ). Residues 239–259 (YFVIFTMCITSPISYPLAMLL) form a helical membrane-spanning segment. At 260–467 (NIILGKENAD…IFDEKDARQE (208 aa)) the chain is on the extracellular side. CBS domains lie at 317-381 (MTEI…GSDT) and 394-461 (KRRK…IFDE). N-linked (GlcNAc...) asparagine glycosylation is present at Asn-364.

The protein belongs to the ACDP family.

It is found in the cell membrane. Its function is as follows. Probable metal transporter. Probably acts redundantly with the other metal transport proteins cnnm-1, cnnm-2, cnnm-3 and cnnm-5 to regulate Mg(2+) homeostasis. This is Metal transporter cnnm-4 from Caenorhabditis elegans.